Here is a 342-residue protein sequence, read N- to C-terminus: Eukaryotic translation initiation factor 3 subunit F (342 aa).

Residues 30 to 166 (VAIQPQAVFS…SRTYISAPIG (137 aa)) enclose the MPN domain. The tract at residues 310 to 342 (TDALAGDGQKDGGDRKQGGDRRNKGRQQRTQEA) is disordered. Residues 317–331 (GQKDGGDRKQGGDRR) are compositionally biased toward basic and acidic residues.

The protein belongs to the eIF-3 subunit F family. In terms of assembly, component of the eukaryotic translation initiation factor 3 (eIF-3) complex.

The protein resides in the cytoplasm. In terms of biological role, component of the eukaryotic translation initiation factor 3 (eIF-3) complex, which is involved in protein synthesis of a specialized repertoire of mRNAs and, together with other initiation factors, stimulates binding of mRNA and methionyl-tRNAi to the 40S ribosome. The eIF-3 complex specifically targets and initiates translation of a subset of mRNAs involved in cell proliferation. The polypeptide is Eukaryotic translation initiation factor 3 subunit F (Phaeosphaeria nodorum (strain SN15 / ATCC MYA-4574 / FGSC 10173) (Glume blotch fungus)).